We begin with the raw amino-acid sequence, 354 residues long: CX3C chemokine receptor 1 (354 aa).

Topologically, residues 1–32 are extracellular; the sequence is MPTSFPELDLENFEYDDSAEACYLGDIVAFGT. Residues 33-60 traverse the membrane as a helical segment; it reads IFLSIFYSLVFTFGLVGNLLVVLALTNS. Residues 61-70 lie on the Cytoplasmic side of the membrane; the sequence is RKSKSITDIY. A helical membrane pass occupies residues 71–91; the sequence is LLNLALSDLLFVATLPFWTHY. At 92–104 the chain is on the extracellular side; it reads LISHEGLHNAMCK. C103 and C176 are oxidised to a cystine. Residues 105 to 126 traverse the membrane as a helical segment; that stretch reads LTTAFFFIGFFGGIFFITVISI. At 127 to 143 the chain is on the cytoplasmic side; sequence DRYLAIVLAANSMNNRT. Residues 144–168 form a helical membrane-spanning segment; it reads VQHGVTISLGVWAAAILVASPQFMF. Residues 169–196 lie on the Extracellular side of the membrane; that stretch reads TKRKDNECLGDYPEVLQEIWPVLRNSEV. The chain crosses the membrane as a helical span at residues 197–216; the sequence is NILGFVLPLLIMSFCYFRIV. Residues 217-232 lie on the Cytoplasmic side of the membrane; sequence RTLFSCKNRKKARAIR. The chain crosses the membrane as a helical span at residues 233-257; that stretch reads LILLVVVVFFLFWTPYNIVIFLETL. Over 258–274 the chain is Extracellular; that stretch reads KFYNFFPSCGMKRDLRW. The helical transmembrane segment at 275-298 threads the bilayer; it reads ALSVTETVAFSHCCLNPFIYAFAG. The Cytoplasmic portion of the chain corresponds to 299-354; sequence EKFRRYLRHLYNKCLAVLCGRPVHAGFSTESQRSRQDSILSSLTHYTSEGEGSLLL. Position 345 is a phosphothreonine (T345).

This sequence belongs to the G-protein coupled receptor 1 family. Found in a ternary complex with CX3CL1 and ITGAV:ITGB3 or ITGA4:ITGB1. Post-translationally, this protein is not N-glycosylated which is unusual for G-protein-coupled receptors. Most abundant in adult spinal cord, brain, kidney, gut, uterus and testes.

Its subcellular location is the cell membrane. Its function is as follows. Receptor for the C-X3-C chemokine fractalkine (CX3CL1) present on many early leukocyte cells; CX3CR1-CX3CL1 signaling exerts distinct functions in different tissue compartments, such as immune response, inflammation, cell adhesion and chemotaxis. CX3CR1-CX3CL1 signaling mediates cell migratory functions. Responsible for the recruitment of natural killer (NK) cells to inflamed tissues. Acts as a regulator of inflammation process leading to atherogenesis by mediating macrophage and monocyte recruitment to inflamed atherosclerotic plaques, promoting cell survival. Involved in airway inflammation by promoting interleukin 2-producing T helper (Th2) cell survival in inflamed lung. Involved in the migration of circulating monocytes to non-inflamed tissues, where they differentiate into macrophages and dendritic cells. Acts as a negative regulator of angiogenesis, probably by promoting macrophage chemotaxis. Plays a key role in brain microglia by regulating inflammatory response in the central nervous system (CNS) and regulating synapse maturation. Required to restrain the microglial inflammatory response in the CNS and the resulting parenchymal damage in response to pathological stimuli. Involved in brain development by participating in synaptic pruning, a natural process during which brain microglia eliminates extra synapses during postnatal development. Synaptic pruning by microglia is required to promote the maturation of circuit connectivity during brain development. Acts as an important regulator of the gut microbiota by controlling immunity to intestinal bacteria and fungi. Expressed in lamina propria dendritic cells in the small intestine, which form transepithelial dendrites capable of taking up bacteria in order to provide defense against pathogenic bacteria. Required to initiate innate and adaptive immune responses against dissemination of commensal fungi (mycobiota) component of the gut: expressed in mononuclear phagocytes (MNPs) and acts by promoting induction of antifungal IgG antibodies response to confer protection against disseminated C.albicans or C.auris infection. Also acts as a receptor for C-C motif chemokine CCL26, inducing cell chemotaxis. This chain is CX3C chemokine receptor 1, found in Rattus norvegicus (Rat).